A 302-amino-acid chain; its full sequence is 5'-3' exonuclease (302 aa).

The 5'-3' exonuclease domain maps to 173–269 (IPKLIPDLLG…NITTKKIKML (97 aa)).

5'-3' exonuclease acting preferentially on double-stranded DNA. The sequence is that of 5'-3' exonuclease (pol) from Buchnera aphidicola subsp. Baizongia pistaciae (strain Bp).